The primary structure comprises 595 residues: DNA primase (595 aa).

The CHC2-type zinc finger occupies 38–62 (CPFHQEKTPSFTVSNSKRFFYCFGC). Residues 250 to 332 (NHSILVEGYF…EKKISFIRLP (83 aa)) enclose the Toprim domain. Residues E256, D300, and D302 each coordinate Mg(2+).

Belongs to the DnaG primase family. As to quaternary structure, monomer. Interacts with DnaB. The cofactor is Zn(2+). Mg(2+) serves as cofactor.

The enzyme catalyses ssDNA + n NTP = ssDNA/pppN(pN)n-1 hybrid + (n-1) diphosphate.. Functionally, RNA polymerase that catalyzes the synthesis of short RNA molecules used as primers for DNA polymerase during DNA replication. In Rickettsia conorii (strain ATCC VR-613 / Malish 7), this protein is DNA primase.